A 307-amino-acid chain; its full sequence is Aspartate carbamoyltransferase catalytic subunit (307 aa).

R58 and T59 together coordinate carbamoyl phosphate. K86 lines the L-aspartate pocket. R108, H138, and Q141 together coordinate carbamoyl phosphate. Positions 171 and 223 each coordinate L-aspartate. Carbamoyl phosphate is bound by residues A264 and P265.

It belongs to the aspartate/ornithine carbamoyltransferase superfamily. ATCase family. In terms of assembly, heterododecamer (2C3:3R2) of six catalytic PyrB chains organized as two trimers (C3), and six regulatory PyrI chains organized as three dimers (R2).

The catalysed reaction is carbamoyl phosphate + L-aspartate = N-carbamoyl-L-aspartate + phosphate + H(+). It functions in the pathway pyrimidine metabolism; UMP biosynthesis via de novo pathway; (S)-dihydroorotate from bicarbonate: step 2/3. Its function is as follows. Catalyzes the condensation of carbamoyl phosphate and aspartate to form carbamoyl aspartate and inorganic phosphate, the committed step in the de novo pyrimidine nucleotide biosynthesis pathway. This chain is Aspartate carbamoyltransferase catalytic subunit, found in Streptococcus suis (strain 98HAH33).